A 160-amino-acid polypeptide reads, in one-letter code: Ribosome maturation factor RimP (160 aa).

The protein belongs to the RimP family.

The protein localises to the cytoplasm. Required for maturation of 30S ribosomal subunits. This is Ribosome maturation factor RimP from Symbiobacterium thermophilum (strain DSM 24528 / JCM 14929 / IAM 14863 / T).